We begin with the raw amino-acid sequence, 242 residues long: Vacuole localized DSC protein 1 (242 aa).

A run of 2 helical transmembrane segments spans residues 128-148 and 152-172; these read PYGFVIMLLIREFTCPVPTAF and LLLVLLDILLLFCQIVIINGS.

As to quaternary structure, part of the vacuole-localized DSC E3 ligase complex composed of at least TUL1, DSC2, DSC3, UBX3, CDC48 and VLD1.

Its subcellular location is the vacuole membrane. In terms of biological role, component of the vacuole-localized DSC E3 ubiquitin ligase complex involved in the targeting of the complex to the vacuole membrane via the AP3 pathway to ubiquinate vacuolar membrane proteins. Competes with GLD1 to determine the subcellular localizations of the DSC complex. The sequence is that of Vacuole localized DSC protein 1 from Saccharomyces cerevisiae (strain ATCC 204508 / S288c) (Baker's yeast).